The sequence spans 88 residues: Conotoxin Ca8.3 (88 aa).

A signal peptide spans 1–21; it reads MMLKMGAMFVLLLLFILPSSQ. A propeptide spanning residues 22–46 is cleaved from the precursor; it reads QEGDVQARKTHLKSGFYGTLAMSTR.

The protein belongs to the conotoxin S superfamily. In terms of processing, contains 5 disulfide bonds. In terms of tissue distribution, expressed by the venom duct.

It is found in the secreted. The chain is Conotoxin Ca8.3 from Conus caracteristicus (Characteristic cone).